Consider the following 183-residue polypeptide: 2-C-methyl-D-erythritol 2,4-cyclodiphosphate synthase (183 aa).

Asp10 and His12 together coordinate a divalent metal cation. 4-CDP-2-C-methyl-D-erythritol 2-phosphate is bound by residues 10-12 (DVH) and 38-39 (HS). His46 lines the a divalent metal cation pocket. Residues 60–62 (DIG) and 65–69 (FPDTD) contribute to the 4-CDP-2-C-methyl-D-erythritol 2-phosphate site.

This sequence belongs to the IspF family. In terms of assembly, homotrimer. A divalent metal cation serves as cofactor.

It carries out the reaction 4-CDP-2-C-methyl-D-erythritol 2-phosphate = 2-C-methyl-D-erythritol 2,4-cyclic diphosphate + CMP. It participates in isoprenoid biosynthesis; isopentenyl diphosphate biosynthesis via DXP pathway; isopentenyl diphosphate from 1-deoxy-D-xylulose 5-phosphate: step 4/6. Involved in the biosynthesis of isopentenyl diphosphate (IPP) and dimethylallyl diphosphate (DMAPP), two major building blocks of isoprenoid compounds. Catalyzes the conversion of 4-diphosphocytidyl-2-C-methyl-D-erythritol 2-phosphate (CDP-ME2P) to 2-C-methyl-D-erythritol 2,4-cyclodiphosphate (ME-CPP) with a corresponding release of cytidine 5-monophosphate (CMP). This Verminephrobacter eiseniae (strain EF01-2) protein is 2-C-methyl-D-erythritol 2,4-cyclodiphosphate synthase.